The sequence spans 118 residues: DNA-binding protein M164_1799 (118 aa).

It belongs to the PDCD5 family.

The chain is DNA-binding protein M164_1799 from Saccharolobus islandicus (strain M.16.4 / Kamchatka #3) (Sulfolobus islandicus).